The sequence spans 608 residues: MKWLKQLQSLHTKLVIVYVLLIIIGMQIIGLYFTNSLEKELTNNFMKNIKQYATQLEVNIERIYRDDPSNAQKEVQSLLNEYANRQEIEEIRFIDKDQIIMATAKISSHNMINQKVNDNSVQKALSLGESNSHNVLKDYGSGKERIWIYNLPVKNGNETIGNIYIESNINDVYNQLNNINQIFIIGTAISLFITVILGFFIARTITRPITDMRNQTVEMSKGNYTQRVKIYGNDEIGELALAFNNLSKRVQEAQANTESEKRRLDSVITHMSDGIIATDRRGRVRIVNDMAIKMLGMSKEDLIGYYMLSVLNLEDEFSLDEIQENNDSFLLDINEDEGIIARVNFSTIVQETGFVTGYIAVLHDVTEQQQVERERREFVANVSHELRTPLTSMNSYIEALEEGVWKDDNLAPSFLSVTREETERMIRLVNDLLQLSKMDNESEQITKEIVDFNMFINKIINRHEMAAKDTTFVREIPSETIFTEIDPDKMTQVFDNVITNAMKYSRGEKRVEFHVKQNALYNRMTIRIKDNGIGIPINKVDKIFDRFYRVDKARTRKMGGTGLGLAISKEIVEAHNGRIWANSVEGQGTSIFITLPCEVIDDGDWDEE.

2 helical membrane passes run 14–34 (LVIV…LYFT) and 182–202 (IFII…FFIA). One can recognise an HAMP domain in the interval 203–255 (RTITRPITDMRNQTVEMSKGNYTQRVKIYGNDEIGELALAFNNLSKRVQEAQA). The PAS domain maps to 260–330 (EKRRLDSVIT…EIQENNDSFL (71 aa)). The region spanning 324–377 (ENNDSFLLDINEDEGIIARVNFSTIVQETGFVTGYIAVLHDVTEQQQVERERRE) is the PAC domain. Residues 381–599 (NVSHELRTPL…SIFITLPCEV (219 aa)) enclose the Histidine kinase domain. Histidine 384 carries the phosphohistidine; by autocatalysis modification.

Post-translationally, autophosphorylated.

It is found in the cell membrane. It catalyses the reaction ATP + protein L-histidine = ADP + protein N-phospho-L-histidine.. Its function is as follows. Member of the two-component regulatory system WalK/WalR. WalK functions as a sensor protein kinase which is autophosphorylated at a histidine residue and transfers its phosphate group to WalR. The polypeptide is Sensor protein kinase WalK (walK) (Staphylococcus haemolyticus (strain JCSC1435)).